A 907-amino-acid chain; its full sequence is CRM-domain containing factor CFM3B, chloroplastic (907 aa).

A chloroplast-targeting transit peptide spans 1-59; that stretch reads MAINSSHHFCPMTTTTTTSAKFVDSLGSSFCKFHGTSSSISLRSYRFGFSFMKNVKRLS. Disordered stretches follow at residues 62 to 89 and 101 to 123; these read GSSS…SKVV and LGVI…GSSS. Residues 70–84 show a composition bias toward polar residues; it reads RNENWNRTQKQNQFR. CRM domains follow at residues 220–316 and 421–518; these read MTLS…DGSG and STLG…EVGE. A coiled-coil region spans residues 621–654; that stretch reads SAKLVRKLERKLAFAEKKLLKAERALAKVEESLK. Positions 663–763 constitute a CRM 3 domain; the sequence is EGITEEERFM…KDYKRPTTLR (101 aa). Positions 824–907 are disordered; the sequence is MAYSSDEETE…LQNEELDVQP (84 aa). Composition is skewed to acidic residues over residues 828–857 and 868–881; these read SDEE…DEEG and TDVE…DTDF. A compositionally biased stretch (polar residues) spans 882–897; it reads GDNSASSTTPETTFVE.

Interacts with RNA. Part of large ribonucleo-protein particles that contain CAF1 and/or CAF2, and RNC1. Interacts with RFC3 in plastids. Expressed at low levels in roots and shoots.

It is found in the plastid. The protein localises to the chloroplast. Binds specific group II introns in chloroplasts and facilitates their splicing. Exhibits non-specific action during plastid rRNA biogenesis; RFC3 prevents unaccurate splicing to improve the accuracy of plastid rRNA processing. Acts on subgroup IIB introns. The substrates of the subgroup IIB also require the CRM domain proteins CAF1 or CAF2, with a simultaneous binding of CFM3B and CAF1 or CAF2. Required for seed development. This is CRM-domain containing factor CFM3B, chloroplastic from Arabidopsis thaliana (Mouse-ear cress).